The following is a 714-amino-acid chain: Glycine--tRNA ligase beta subunit (714 aa).

It belongs to the class-II aminoacyl-tRNA synthetase family. As to quaternary structure, tetramer of two alpha and two beta subunits.

The protein localises to the cytoplasm. The enzyme catalyses tRNA(Gly) + glycine + ATP = glycyl-tRNA(Gly) + AMP + diphosphate. This chain is Glycine--tRNA ligase beta subunit, found in Rhodospirillum centenum (strain ATCC 51521 / SW).